Here is a 188-residue protein sequence, read N- to C-terminus: Probable nicotinate-nucleotide adenylyltransferase (188 aa).

Belongs to the NadD family.

It catalyses the reaction nicotinate beta-D-ribonucleotide + ATP + H(+) = deamido-NAD(+) + diphosphate. It participates in cofactor biosynthesis; NAD(+) biosynthesis; deamido-NAD(+) from nicotinate D-ribonucleotide: step 1/1. In terms of biological role, catalyzes the reversible adenylation of nicotinate mononucleotide (NaMN) to nicotinic acid adenine dinucleotide (NaAD). The sequence is that of Probable nicotinate-nucleotide adenylyltransferase from Sulfurovum sp. (strain NBC37-1).